Consider the following 84-residue polypeptide: Small ribosomal subunit protein uS17 (84 aa).

The protein belongs to the universal ribosomal protein uS17 family. Part of the 30S ribosomal subunit.

In terms of biological role, one of the primary rRNA binding proteins, it binds specifically to the 5'-end of 16S ribosomal RNA. The protein is Small ribosomal subunit protein uS17 of Vibrio cholerae serotype O1 (strain ATCC 39541 / Classical Ogawa 395 / O395).